A 1413-amino-acid chain; its full sequence is Alpha-latrocrustotoxin-Lt1a (1413 aa).

A propeptide spanning residues 1–28 is cleaved from the precursor; the sequence is VSIFIFHFSANILVRNSEMKGKRVISKR. The interval 238–257 is helix H8 is the probable transmembrane region of the tetrameric pore inserted in the target cell membrane; it reads ALFALFYGTQTFISIMFYLV. ANK repeat units lie at residues 457–490, 494–524, 528–557, 562–592, 596–625, 629–658, 664–694, 699–729, 733–762, 766–795, 799–828, 832–861, 866–895, 899–928, 965–995, 996–1026, 1031–1072, 1077–1106, 1109–1139, and 1143–1172; these read DIHR…QVGA, MGRK…LLNV, NGYT…DVNV, NELT…DVNA, AGFT…GINI, SGLT…KVKL, NGMT…DVNA, KNWT…DIST, QAIT…VVDQ, NGFT…NINA, DGST…NIKA, INQM…SLMN, RDEY…DVNE, DGNT…DFRL, RGKT…TLNE, DQCS…NPTA, NQVS…DINK, QQST…DPNK, RGDP…DVNT, and EQFT…DVNA. Positions 1193 to 1413 are excised as a propeptide; the sequence is RSLGRRFFRN…NRPTNVLQIK (221 aa).

Belongs to the cationic peptide 01 (latrotoxin) family. 01 (alpha-latrocrustotoxin) subfamily. In terms of assembly, homotetramer in membranes. In terms of tissue distribution, expressed by the venom gland.

It localises to the secreted. It is found in the target cell membrane. Crustacean-selective presynaptic neurotoxin that induces neurotransmitter exocytosis. May bind to crustacean neurexin-1 homolog, adhesion G protein-coupled receptor L1 homolog, and receptor-type tyrosine-protein phosphatase S homolog, and induces neurotransmitter exocytosis both by forming tetrameric pores in membranes and signaling via G protein-coupled receptor. This recombinant protein form channels in artificial membrane bilayers, that are stabilized by calcium ions and allow calcium flux at negative membrane potentials. The protein is Alpha-latrocrustotoxin-Lt1a of Latrodectus tredecimguttatus (Mediterranean black widow spider).